A 74-amino-acid polypeptide reads, in one-letter code: Protein SlyX homolog (74 aa).

It belongs to the SlyX family.

The sequence is that of Protein SlyX homolog from Neisseria meningitidis serogroup A / serotype 4A (strain DSM 15465 / Z2491).